A 598-amino-acid polypeptide reads, in one-letter code: Transcription factor COE3 (598 aa).

Positions 1-23 (MFGIQENIPRGGTTMKEEPLGGG) are disordered. The segment at 63–66 (RKSN) is interaction with DNA. The segment at 151 to 170 (CRVLLTHEIMCSRCCDKKSC) adopts a C5-type zinc-finger fold. Interaction with DNA stretches follow at residues 197-204 (NCLKNAGN) and 236-239 (NNSK). The IPT/TIG domain occupies 264–347 (PCIKAISPSE…KGAPGRFVYT (84 aa)). The segment at 452 to 483 (TSQANDQVGYSRNTSSVSPRGYVPSSTPQQSN) is disordered.

It belongs to the COE family. As to quaternary structure, forms either a homodimer or a heterodimer with a related family member.

It is found in the nucleus. In terms of biological role, acts as a transcriptional activator. The polypeptide is Transcription factor COE3 (coe3) (Xenopus laevis (African clawed frog)).